The chain runs to 347 residues: Farnesyl pyrophosphate synthase ERG20 (347 aa).

The isopentenyl diphosphate site is built by Lys50, Arg53, and Gln88. Asp95 and Asp99 together coordinate Mg(2+). Arg104 serves as a coordination point for dimethylallyl diphosphate. Arg105 is a binding site for isopentenyl diphosphate. Residues Lys192, Thr193, Gln232, Lys249, and Lys258 each contribute to the dimethylallyl diphosphate site.

Belongs to the FPP/GGPP synthase family. Mg(2+) is required as a cofactor.

It carries out the reaction isopentenyl diphosphate + dimethylallyl diphosphate = (2E)-geranyl diphosphate + diphosphate. The enzyme catalyses isopentenyl diphosphate + (2E)-geranyl diphosphate = (2E,6E)-farnesyl diphosphate + diphosphate. Its pathway is isoprenoid biosynthesis; farnesyl diphosphate biosynthesis; farnesyl diphosphate from geranyl diphosphate and isopentenyl diphosphate: step 1/1. It functions in the pathway isoprenoid biosynthesis; geranyl diphosphate biosynthesis; geranyl diphosphate from dimethylallyl diphosphate and isopentenyl diphosphate: step 1/1. Farnesyl pyrophosphate synthase; part of the second module of ergosterol biosynthesis pathway that includes the middle steps of the pathway. ERG20 catalyzes the sequential condensation of isopentenyl pyrophosphate with dimethylallyl pyrophosphate, and then with the resultant geranylpyrophosphate to the ultimate product farnesyl pyrophosphate. The second module is carried out in the vacuole and involves the formation of farnesyl diphosphate, which is also an important intermediate in the biosynthesis of ubiquinone, dolichol, heme and prenylated proteins. Activity by the mevalonate kinase ERG12 (FG05912) first converts mevalonate into 5-phosphomevalonate. 5-phosphomevalonate is then further converted to 5-diphosphomevalonate by the phosphomevalonate kinase ERG8 (FG09764). The diphosphomevalonate decarboxylase ERG19 (FG10424) then produces isopentenyl diphosphate. The isopentenyl-diphosphate delta-isomerase IDI1 (FG09722) then catalyzes the 1,3-allylic rearrangement of the homoallylic substrate isopentenyl (IPP) to its highly electrophilic allylic isomer, dimethylallyl diphosphate (DMAPP). Finally the farnesyl diphosphate synthase ERG20 (FG06784) catalyzes the sequential condensation of isopentenyl pyrophosphate with dimethylallyl pyrophosphate, and then with the resultant geranylpyrophosphate to the ultimate product farnesyl pyrophosphate. This Gibberella zeae (strain ATCC MYA-4620 / CBS 123657 / FGSC 9075 / NRRL 31084 / PH-1) (Wheat head blight fungus) protein is Farnesyl pyrophosphate synthase ERG20.